A 332-amino-acid polypeptide reads, in one-letter code: Glyceraldehyde-3-phosphate dehydrogenase (332 aa).

Residues 10 to 11 (RI), aspartate 32, and methionine 77 each bind NAD(+). D-glyceraldehyde 3-phosphate-binding positions include 148 to 150 (SCT), threonine 179, 208 to 209 (TG), and arginine 231. The active-site Nucleophile is cysteine 149. Asparagine 313 lines the NAD(+) pocket.

This sequence belongs to the glyceraldehyde-3-phosphate dehydrogenase family. As to quaternary structure, homotetramer.

The protein localises to the cytoplasm. It catalyses the reaction D-glyceraldehyde 3-phosphate + phosphate + NAD(+) = (2R)-3-phospho-glyceroyl phosphate + NADH + H(+). It functions in the pathway carbohydrate degradation; glycolysis; pyruvate from D-glyceraldehyde 3-phosphate: step 1/5. In Phytophthora infestans (Potato late blight agent), this protein is Glyceraldehyde-3-phosphate dehydrogenase (GPDA).